A 265-amino-acid chain; its full sequence is Inositol monophosphatase 2 (265 aa).

4 residues coordinate Mg(2+): Glu65, Asp86, Leu88, and Asp89. Residue Glu65 participates in substrate binding. Residues 88 to 91 (LDGT), 189 to 191 (GSC), Glu208, and Asp216 each bind substrate. Residue Asp216 coordinates Mg(2+).

It belongs to the inositol monophosphatase superfamily. Mg(2+) serves as cofactor. As to expression, low expression in roots, stems, leaves, flowers and young and mature green fruits. Expressed in the stem/leaf junctions, below the shoot apex and on the abaxial side of the petiole of the first expanded leaflets.

The enzyme catalyses a myo-inositol phosphate + H2O = myo-inositol + phosphate. The protein operates within polyol metabolism; myo-inositol biosynthesis; myo-inositol from D-glucose 6-phosphate: step 2/2. Responsible for the provision of inositol required for synthesis of phosphatidylinositol and polyphosphoinositides. The protein is Inositol monophosphatase 2 (IMP2) of Solanum lycopersicum (Tomato).